Reading from the N-terminus, the 227-residue chain is PKHD-type hydroxylase Pden_4677 (227 aa).

The Fe2OG dioxygenase domain maps to 78 to 178; the sequence is HILPPMFNRY…RWASFFWAQS (101 aa). The Fe cation site is built by H96, D98, and H159. R169 contacts 2-oxoglutarate.

The cofactor is Fe(2+). L-ascorbate serves as cofactor.

This Paracoccus denitrificans (strain Pd 1222) protein is PKHD-type hydroxylase Pden_4677.